A 1944-amino-acid polypeptide reads, in one-letter code: Anaphase-promoting complex subunit 1 (1944 aa).

A phosphoserine mark is found at Ser51, Ser60, Ser202, and Ser286. Thr291 is subject to Phosphothreonine. Residues 305-343 (LRSLSKGDSPVTSPFQNYSSIHSQSRSTSSPSLHSRSPS) form a disordered region. A phosphoserine mark is found at Ser313, Ser341, Ser343, Ser355, Ser362, Ser373, and Ser377. Over residues 323-343 (SSIHSQSRSTSSPSLHSRSPS) the composition is skewed to low complexity. Residues 373 to 396 (SHNQSPKRHSISHSPNSNSNGSFL) are disordered. Positions 384–394 (SHSPNSNSNGS) are enriched in low complexity. Phosphothreonine is present on Thr537. Phosphoserine is present on residues Ser547 and Ser555. Tyr571 is modified (phosphotyrosine). Ser686, Ser688, and Ser916 each carry phosphoserine. Residues 994-1016 (KGKSVLSSDVPSGTETEEEDDGM) are disordered. Positions 998–1007 (VLSSDVPSGT) are enriched in polar residues. 4 PC repeats span residues 1297-1325 (AAGL…PEQL), 1366-1404 (GATL…PEFL), 1467-1501 (GACL…YLSA), and 1520-1552 (LLSL…EMNY).

It belongs to the APC1 family. In terms of assembly, the mammalian APC/C is composed at least of 14 distinct subunits ANAPC1, ANAPC2, CDC27/APC3, ANAPC4, ANAPC5, CDC16/APC6, ANAPC7, CDC23/APC8, ANAPC10, ANAPC11, CDC26/APC12, ANAPC13, ANAPC15 and ANAPC16 that assemble into a complex of at least 19 chains with a combined molecular mass of around 1.2 MDa; APC/C interacts with FZR1 and FBXO5. Post-translationally, phosphorylated. Phosphorylation on Ser-355 occurs specifically during mitosis.

It functions in the pathway protein modification; protein ubiquitination. In terms of biological role, component of the anaphase promoting complex/cyclosome (APC/C), a cell cycle-regulated E3 ubiquitin ligase that controls progression through mitosis and the G1 phase of the cell cycle. The APC/C complex acts by mediating ubiquitination and subsequent degradation of target proteins: it mainly mediates the formation of 'Lys-11'-linked polyubiquitin chains and, to a lower extent, the formation of 'Lys-48'- and 'Lys-63'-linked polyubiquitin chains. The APC/C complex catalyzes assembly of branched 'Lys-11'-/'Lys-48'-linked branched ubiquitin chains on target proteins. This Homo sapiens (Human) protein is Anaphase-promoting complex subunit 1 (ANAPC1).